A 70-amino-acid polypeptide reads, in one-letter code: Large ribosomal subunit protein bL31 (70 aa).

C16, C18, C37, and C40 together coordinate Zn(2+).

Belongs to the bacterial ribosomal protein bL31 family. Type A subfamily. As to quaternary structure, part of the 50S ribosomal subunit. Zn(2+) is required as a cofactor.

In terms of biological role, binds the 23S rRNA. This chain is Large ribosomal subunit protein bL31, found in Shewanella sp. (strain MR-4).